A 364-amino-acid polypeptide reads, in one-letter code: 3-isopropylmalate dehydrogenase (364 aa).

An NAD(+)-binding site is contributed by 79–92; that stretch reads GPKWEHLPPDQQPE. Residues Arg-100, Arg-110, Arg-139, and Asp-228 each contribute to the substrate site. Asp-228, Asp-252, and Asp-256 together coordinate Mg(2+). Residue 286-298 participates in NAD(+) binding; that stretch reads GSAPDIAGKNIAN.

This sequence belongs to the isocitrate and isopropylmalate dehydrogenases family. LeuB type 1 subfamily. As to quaternary structure, homodimer. Mg(2+) serves as cofactor. Requires Mn(2+) as cofactor.

Its subcellular location is the cytoplasm. It carries out the reaction (2R,3S)-3-isopropylmalate + NAD(+) = 4-methyl-2-oxopentanoate + CO2 + NADH. It functions in the pathway amino-acid biosynthesis; L-leucine biosynthesis; L-leucine from 3-methyl-2-oxobutanoate: step 3/4. In terms of biological role, catalyzes the oxidation of 3-carboxy-2-hydroxy-4-methylpentanoate (3-isopropylmalate) to 3-carboxy-4-methyl-2-oxopentanoate. The product decarboxylates to 4-methyl-2 oxopentanoate. This Escherichia coli (strain UTI89 / UPEC) protein is 3-isopropylmalate dehydrogenase.